The sequence spans 350 residues: Glycosyltransferase 8 domain-containing protein 2 (350 aa).

The Cytoplasmic segment spans residues 1 to 6 (MALLRK). The helical; Signal-anchor for type II membrane protein transmembrane segment at 7–24 (INQVLLFLLIVTLCGILY) threads the bilayer. Residues 25–349 (KKVHKGTMLR…AGIFKLHHPN (325 aa)) are Lumenal-facing. N-linked (GlcNAc...) asparagine glycosylation occurs at Asn-234.

This sequence belongs to the glycosyltransferase 8 family.

It is found in the membrane. The polypeptide is Glycosyltransferase 8 domain-containing protein 2 (GLT8D2) (Bos taurus (Bovine)).